Here is a 273-residue protein sequence, read N- to C-terminus: ATP synthase subunit delta (273 aa).

The protein belongs to the ATPase delta chain family. In terms of assembly, F-type ATPases have 2 components, F(1) - the catalytic core - and F(0) - the membrane proton channel. F(1) has five subunits: alpha(3), beta(3), gamma(1), delta(1), epsilon(1). F(0) has three main subunits: a(1), b(2) and c(10-14). The alpha and beta chains form an alternating ring which encloses part of the gamma chain. F(1) is attached to F(0) by a central stalk formed by the gamma and epsilon chains, while a peripheral stalk is formed by the delta and b chains.

The protein resides in the cell membrane. Its function is as follows. F(1)F(0) ATP synthase produces ATP from ADP in the presence of a proton or sodium gradient. F-type ATPases consist of two structural domains, F(1) containing the extramembraneous catalytic core and F(0) containing the membrane proton channel, linked together by a central stalk and a peripheral stalk. During catalysis, ATP synthesis in the catalytic domain of F(1) is coupled via a rotary mechanism of the central stalk subunits to proton translocation. Functionally, this protein is part of the stalk that links CF(0) to CF(1). It either transmits conformational changes from CF(0) to CF(1) or is implicated in proton conduction. The polypeptide is ATP synthase subunit delta (Corynebacterium diphtheriae (strain ATCC 700971 / NCTC 13129 / Biotype gravis)).